The sequence spans 567 residues: DNA ligase B (567 aa).

The active-site N6-AMP-lysine intermediate is the Lys132.

Belongs to the NAD-dependent DNA ligase family. LigB subfamily.

It catalyses the reaction NAD(+) + (deoxyribonucleotide)n-3'-hydroxyl + 5'-phospho-(deoxyribonucleotide)m = (deoxyribonucleotide)n+m + AMP + beta-nicotinamide D-nucleotide.. Catalyzes the formation of phosphodiester linkages between 5'-phosphoryl and 3'-hydroxyl groups in double-stranded DNA using NAD as a coenzyme and as the energy source for the reaction. The polypeptide is DNA ligase B (Yersinia pestis).